A 419-amino-acid polypeptide reads, in one-letter code: Aminoacyltransferase FemB (419 aa).

It belongs to the FemABX family. As to quaternary structure, homodimer. Interacts with FemA.

Its subcellular location is the cytoplasm. It carries out the reaction MurNAc-L-Ala-D-isoglutaminyl-L-Lys-(N(6)-tri-Gly)-D-Ala-D-Ala-diphospho-di-trans,octa-cis-undecaprenyl-GlcNAc + 2 glycyl-tRNA(Gly) = MurNAc-L-Ala-D-isoglutaminyl-L-Lys-(N(6)-penta-Gly)-D-Ala-D-Ala-diphospho-di-trans,octa-cis-undecaprenyl-GlcNAc + 2 tRNA(Gly) + 2 H(+). Functionally, catalyzes the formation of the pentaglycine interpeptide bridge, which is characteristic of the S.aureus peptidoglycan. Adds glycines 4 and 5 of the pentaglycine bridge, using glycyl-tRNA(Gly) as donor. Involved in resistance to methicillin. The sequence is that of Aminoacyltransferase FemB (femB) from Staphylococcus aureus (strain NCTC 8325 / PS 47).